We begin with the raw amino-acid sequence, 360 residues long: Probable dual-specificity RNA methyltransferase RlmN (360 aa).

E97 acts as the Proton acceptor in catalysis. Residues 103-330 (DGDRLTFCIS…TAVRRSRGLD (228 aa)) enclose the Radical SAM core domain. The cysteines at positions 110 and 335 are disulfide-linked. 3 residues coordinate [4Fe-4S] cluster: C117, C121, and C124. S-adenosyl-L-methionine contacts are provided by residues 165–166 (GE), S197, 220–222 (SIH), and H292. The active-site S-methylcysteine intermediate is the C335.

It belongs to the radical SAM superfamily. RlmN family. The cofactor is [4Fe-4S] cluster.

It is found in the cytoplasm. It carries out the reaction adenosine(2503) in 23S rRNA + 2 reduced [2Fe-2S]-[ferredoxin] + 2 S-adenosyl-L-methionine = 2-methyladenosine(2503) in 23S rRNA + 5'-deoxyadenosine + L-methionine + 2 oxidized [2Fe-2S]-[ferredoxin] + S-adenosyl-L-homocysteine. The catalysed reaction is adenosine(37) in tRNA + 2 reduced [2Fe-2S]-[ferredoxin] + 2 S-adenosyl-L-methionine = 2-methyladenosine(37) in tRNA + 5'-deoxyadenosine + L-methionine + 2 oxidized [2Fe-2S]-[ferredoxin] + S-adenosyl-L-homocysteine. Its function is as follows. Specifically methylates position 2 of adenine 2503 in 23S rRNA and position 2 of adenine 37 in tRNAs. This is Probable dual-specificity RNA methyltransferase RlmN from Gemmatimonas aurantiaca (strain DSM 14586 / JCM 11422 / NBRC 100505 / T-27).